Consider the following 107-residue polypeptide: Probable monothiol glutaredoxin 2 (107 aa).

The Glutaredoxin domain occupies 7 to 107 (LEFIQNAIKK…LEKMLKDVVV (101 aa)). Residue Lys-24 coordinates glutathione. Residue Cys-32 participates in [2Fe-2S] cluster binding. Glutathione-binding positions include Arg-61, Phe-73, and 86–87 (CD).

It belongs to the glutaredoxin family. Monothiol subfamily.

The polypeptide is Probable monothiol glutaredoxin 2 (grxC2) (Rickettsia prowazekii (strain Madrid E)).